The sequence spans 248 residues: 26.2 kDa heat shock protein, mitochondrial (248 aa).

The N-terminal 32 residues, 1 to 32 (MASTVALKGRPLATLLRQLLAADAPPAATGRP), are a transit peptide targeting the mitochondrion. The segment at 26–48 (PAATGRPVAAAPAASGKPVTAPA) is disordered. In terms of domain architecture, sHSP spans 139 to 248 (ATAAARRGGW…RKDVFQVNVE (110 aa)).

It belongs to the small heat shock protein (HSP20) family. May form oligomeric structures.

It is found in the mitochondrion. In Oryza sativa subsp. japonica (Rice), this protein is 26.2 kDa heat shock protein, mitochondrial (HSP26.2).